We begin with the raw amino-acid sequence, 357 residues long: Probable protein phosphatase 2C 60 (357 aa).

One can recognise a PPM-type phosphatase domain in the interval 23–329; that stretch reads RYGLSSMQGW…DNMTMILVRF (307 aa). Residues Asp57, Gly58, Asp272, and Asp320 each coordinate Mn(2+). Residues 331–357 form a disordered region; the sequence is NPTPSETELKPEASQAEGNHDEPSSSN. Residues 348–357 show a composition bias toward basic and acidic residues; sequence GNHDEPSSSN.

The protein belongs to the PP2C family. It depends on Mg(2+) as a cofactor. Mn(2+) is required as a cofactor.

The catalysed reaction is O-phospho-L-seryl-[protein] + H2O = L-seryl-[protein] + phosphate. The enzyme catalyses O-phospho-L-threonyl-[protein] + H2O = L-threonyl-[protein] + phosphate. The polypeptide is Probable protein phosphatase 2C 60 (Arabidopsis thaliana (Mouse-ear cress)).